The primary structure comprises 446 residues: Exodeoxyribonuclease 7 large subunit (446 aa).

Belongs to the XseA family. Heterooligomer composed of large and small subunits.

It is found in the cytoplasm. It carries out the reaction Exonucleolytic cleavage in either 5'- to 3'- or 3'- to 5'-direction to yield nucleoside 5'-phosphates.. Its function is as follows. Bidirectionally degrades single-stranded DNA into large acid-insoluble oligonucleotides, which are then degraded further into small acid-soluble oligonucleotides. The protein is Exodeoxyribonuclease 7 large subunit of Streptococcus equi subsp. zooepidemicus (strain MGCS10565).